A 250-amino-acid chain; its full sequence is Tumor necrosis factor ligand superfamily member 13 (250 aa).

Residues 1-104 (MPASSPFLLA…ENGERSRKRR (104 aa)) constitute a propeptide that is removed on maturation. Disordered regions lie at residues 61 to 82 (EVSR…PWQS) and 89 to 108 (DALE…AVLT). One can recognise a THD domain in the interval 116–250 (SVLHLVPINA…HGTFLGFVKL (135 aa)). Asn124 is a glycosylation site (N-linked (GlcNAc...) asparagine). Residues Cys196 and Cys211 are joined by a disulfide bond.

Belongs to the tumor necrosis factor family. In terms of assembly, homotrimer. In terms of processing, the precursor is cleaved by furin. Expressed at high levels in transformed cell lines, cancers of colon, thyroid, lymphoid tissues and specifically expressed in monocytes and macrophages.

It localises to the secreted. Its function is as follows. Cytokine that binds to TNFRSF13B/TACI and to TNFRSF17/BCMA. Plays a role in the regulation of tumor cell growth. May be involved in monocyte/macrophage-mediated immunological processes. The polypeptide is Tumor necrosis factor ligand superfamily member 13 (TNFSF13) (Homo sapiens (Human)).